The primary structure comprises 179 residues: Alkyl hydroperoxide reductase AhpD (179 aa).

The active-site Proton donor is Cys-130. Residues Cys-130 and Cys-133 are joined by a disulfide bond. Cys-133 functions as the Cysteine sulfenic acid (-SOH) intermediate in the catalytic mechanism.

This sequence belongs to the AhpD family. In terms of assembly, homotrimer.

The enzyme catalyses N(6)-[(R)-dihydrolipoyl]-L-lysyl-[lipoyl-carrier protein] + a hydroperoxide = N(6)-[(R)-lipoyl]-L-lysyl-[lipoyl-carrier protein] + an alcohol + H2O. Antioxidant protein with alkyl hydroperoxidase activity. Required for the reduction of the AhpC active site cysteine residues and for the regeneration of the AhpC enzyme activity. In Nocardia farcinica (strain IFM 10152), this protein is Alkyl hydroperoxide reductase AhpD.